The following is a 552-amino-acid chain: FERRY endosomal RAB5 effector complex subunit 3 (552 aa).

The interval 383–403 is disordered; sequence LKESLDSGNQNGGNDDKTKNA.

As to quaternary structure, component of the FERRY complex composed of five subunits, TBCK, PPP1R21, FERRY3, CRYZL1 and GATD1 with a ratio of 1:2:1:2:4, respectively.

Its subcellular location is the cytoplasm. It localises to the early endosome. Functionally, component of the FERRY complex (Five-subunit Endosomal Rab5 and RNA/ribosome intermediary). The FERRY complex directly interacts with mRNAs and RAB5A, and functions as a RAB5A effector involved in the localization and the distribution of specific mRNAs most likely by mediating their endosomal transport. The complex recruits mRNAs and ribosomes to early endosomes through direct mRNA-interaction. Plays a role in mast cell degranulation. In Pongo abelii (Sumatran orangutan), this protein is FERRY endosomal RAB5 effector complex subunit 3.